An 812-amino-acid chain; its full sequence is Plasminogen (812 aa).

The first 19 residues, 1 to 19, serve as a signal peptide directing secretion; sequence MDHKEIILLFLLFLKPGQG. A PAN domain is found at 20–98; sequence DSLDGYVSTQ…RDVILFEKRV (79 aa). Intrachain disulfides connect Cys49-Cys73, Cys53-Cys61, Cys103-Cys181, Cys124-Cys164, Cys152-Cys176, Cys185-Cys262, Cys188-Cys316, Cys206-Cys245, Cys234-Cys257, Cys275-Cys352, Cys296-Cys335, Cys324-Cys347, Cys376-Cys454, Cys397-Cys437, Cys425-Cys449, Cys481-Cys560, Cys502-Cys543, Cys531-Cys555, Cys568-Cys687, Cys578-Cys586, and Cys609-Cys625. 5 Kringle domains span residues 102–181, 184–262, 274–352, 375–454, and 480–560; these read ECKT…IPEC, ECMY…IPRC, QCLK…IPSC, ECYQ…LKRC, and DCMY…IPLC. The 229-residue stretch at 582 to 810 folds into the Peptidase S1 domain; that stretch reads VVGGCVANPH…YVNWIEREMR (229 aa). Position 598 is a phosphoserine (Ser598). Catalysis depends on charge relay system residues His624 and Asp667. Ser690 is modified (phosphoserine). Cystine bridges form between Cys701/Cys768, Cys731/Cys747, and Cys758/Cys786. Residue Ser762 is the Charge relay system of the active site.

Belongs to the peptidase S1 family. Plasminogen subfamily. In terms of assembly, interacts (both mature PLG and the angiostatin peptide) with AMOT and CSPG4. Interacts (via the Kringle domains) with HRG; the interaction tethers PLG to the cell surface and enhances its activation. Interacts (via Kringle 4 domain) with ADA; the interaction stimulates PLG activation when in complex with DPP4. Angiostatin: Interacts with ATP5F1A; the interaction inhibits most of the angiogenic effects of angiostatin. Post-translationally, in the presence of the inhibitor, the activation involves only cleavage after Arg-581, yielding two chains held together by two disulfide bonds. In the absence of the inhibitor, the activation involves additionally the removal of the activation peptide.

Its subcellular location is the secreted. It catalyses the reaction Preferential cleavage: Lys-|-Xaa &gt; Arg-|-Xaa, higher selectivity than trypsin. Converts fibrin into soluble products.. Converted into plasmin by plasminogen activators, both plasminogen and its activator being bound to fibrin. Cannot be activated with streptokinase. In terms of biological role, plasmin dissolves the fibrin of blood clots and acts as a proteolytic factor in a variety of other processes including embryonic development, tissue remodeling, tumor invasion, and inflammation. In ovulation, weakens the walls of the Graafian follicle. It activates the urokinase-type plasminogen activator, collagenases and several complement zymogens, such as C1, C4 and C5. Cleavage of fibronectin and laminin leads to cell detachment and apoptosis. Also cleaves fibrin, thrombospondin and von Willebrand factor. Its role in tissue remodeling and tumor invasion may be modulated by CSPG4. Binds to cells. Functionally, angiostatin is an angiogenesis inhibitor that blocks neovascularization and growth of experimental primary and metastatic tumors in vivo. The sequence is that of Plasminogen (Plg) from Rattus norvegicus (Rat).